The chain runs to 97 residues: CLAVATA3/ESR (CLE)-related protein ESR2-C (97 aa).

Residues 1–97 form a disordered region; it reads TRTDDKPGVN…IGPPPFLDRY (97 aa). Hydroxyproline is present on residues Pro-47 and Pro-50. O-linked (Ara...) hydroxyproline glycosylation is present at Pro-50.

This sequence belongs to the CLV3/ESR signal peptide family. Post-translationally, the O-glycosylation (arabinosylation) of the hydroxyproline Pro-50 enhances binding affinity of the ESR2Cp peptide for its receptor. As to expression, seed endosperm.

The protein resides in the secreted. The protein localises to the extracellular space. Extracellular signal peptide that regulates cell fate. The polypeptide is CLAVATA3/ESR (CLE)-related protein ESR2-C (Zea mays (Maize)).